The primary structure comprises 173 residues: Large ribosomal subunit protein uL10 (173 aa).

Belongs to the universal ribosomal protein uL10 family. Part of the ribosomal stalk of the 50S ribosomal subunit. The N-terminus interacts with L11 and the large rRNA to form the base of the stalk. The C-terminus forms an elongated spine to which L12 dimers bind in a sequential fashion forming a multimeric L10(L12)X complex.

Functionally, forms part of the ribosomal stalk, playing a central role in the interaction of the ribosome with GTP-bound translation factors. The protein is Large ribosomal subunit protein uL10 of Maridesulfovibrio salexigens (strain ATCC 14822 / DSM 2638 / NCIMB 8403 / VKM B-1763) (Desulfovibrio salexigens).